A 555-amino-acid chain; its full sequence is Glucose-6-phosphate isomerase (555 aa).

E356 serves as the catalytic Proton donor. Residues H387 and K515 contribute to the active site.

Belongs to the GPI family.

It is found in the cytoplasm. The enzyme catalyses alpha-D-glucose 6-phosphate = beta-D-fructose 6-phosphate. It functions in the pathway carbohydrate biosynthesis; gluconeogenesis. Its pathway is carbohydrate degradation; glycolysis; D-glyceraldehyde 3-phosphate and glycerone phosphate from D-glucose: step 2/4. Catalyzes the reversible isomerization of glucose-6-phosphate to fructose-6-phosphate. This Desulforapulum autotrophicum (strain ATCC 43914 / DSM 3382 / VKM B-1955 / HRM2) (Desulfobacterium autotrophicum) protein is Glucose-6-phosphate isomerase.